Consider the following 156-residue polypeptide: Translation initiation factor IF-1, chloroplastic (156 aa).

The N-terminal 81 residues, Met-1–Ser-81, are a transit peptide targeting the chloroplast. The disordered stretch occupies residues Lys-51–Cys-79. Residues Asn-67–Ser-76 show a composition bias toward low complexity. One can recognise an S1-like domain in the interval Gln-82–Arg-151.

The protein belongs to the IF-1 family. In terms of assembly, component of the 30S ribosomal translation pre-initiation complex which assembles on the 30S ribosome in the order IF-2 and IF-3, IF-1 and N-formylmethionyl-tRNA(fMet); mRNA recruitment can occur at any time during PIC assembly.

The protein localises to the plastid. Its subcellular location is the chloroplast. Its function is as follows. One of the essential components for the initiation of protein synthesis. Stabilizes the binding of IF-2 and IF-3 on the 30S subunit to which N-formylmethionyl-tRNA(fMet) subsequently binds. Helps modulate mRNA selection, yielding the 30S pre-initiation complex (PIC). Upon addition of the 50S ribosomal subunit IF-1, IF-2 and IF-3 are released leaving the mature 70S translation initiation complex. This Solanum lycopersicum (Tomato) protein is Translation initiation factor IF-1, chloroplastic (infA).